Reading from the N-terminus, the 153-residue chain is Transcriptional repressor NrdR (153 aa).

A zinc finger spans residues 3-34; it reads CPFCNHLHDKVVDSRESKEGDAIRRRRECLEC. Positions 49-139 constitute an ATP-cone domain; the sequence is YMVVKKDGRR…VYRDFQDEQA (91 aa).

This sequence belongs to the NrdR family. Zn(2+) serves as cofactor.

Its function is as follows. Negatively regulates transcription of bacterial ribonucleotide reductase nrd genes and operons by binding to NrdR-boxes. This Solibacter usitatus (strain Ellin6076) protein is Transcriptional repressor NrdR.